Reading from the N-terminus, the 449-residue chain is MTELVEHRVCEDRISSLPDDLLVKILLCVPTKDAAATTFLSKRWRFVWRMLPRLNYIETTSDVKSNTVWWFLEESFRFHKAPLLERLWIDLGPQCPINVNPVKWVAKARAPPASNVGPPLLDTRVRWLTFRLLWKGEPIRMPKSFYFCKTLERLTLSDKILVDVPCQVSLPSLRELDLFCVVYKDEDSHVKLLSSCPVLKHLKVTRNRRVEDNVRTFRVEVPSLLRLDYKAGMMFREDSDMSDPFLVTDTPNLLSLHIFDTVGYSLSVWYMPHLVTVVTDELFPSEKFMRPLSSVKYLALSPFDTMVPWCDAVNNYSRLVECMIHLSEYDLLESLLVLLSKCSKLKVFLVDSDIPRWNHDPALWNQPSSIPRCLSSHLEIFEWDGYVGREDEKKIIRYILENSKYLKTAGISPNSTFSGEEKQKMEELESMHRTPTSVLLSSARMSFRY.

In terms of domain architecture, F-box spans glutamate 11 to threonine 59. 6 LRR repeats span residues threonine 60–leucine 91, arginine 153–cysteine 180, valine 182–arginine 206, phenylalanine 235–aspartate 260, valine 275–proline 302, and serine 327–serine 352. The FBD domain maps to tryptophan 364–serine 412.

The sequence is that of Putative F-box/FBD/LRR-repeat protein At3g49480 from Arabidopsis thaliana (Mouse-ear cress).